A 348-amino-acid chain; its full sequence is MTKKDVRILAFESSCDETSTAVIKNGREIESLIVATQIKSHQRFGGVVPEVASRHHIEVITQITKEALDKANATWDDIDAIAVTYGPGLVGALLIGVSAAKAASMATGIPLIGVDHIMGHIMAAQLKDEIEYPALALQVSGGHTEIVLMKDPIHFEIVGDTRDDAAGEAYDKIGRVLGVNYPAGKTIDEWAHKGKDTFHFPRAMMEDDDYDFSFSGLKSAFINTCHHADQIHEELDKYDLAASFQASVVDVLSHKTIRAIKEYKPKTFILGGGVAANHGLRDRLAEEIEKLPADIKPKVILPDLKLCGDNAAMIGAAAYNLYQAGKFSDVNLNADPSLELPYADSMLK.

2 residues coordinate Fe cation: histidine 116 and histidine 120. Substrate is bound by residues 138-142 (QVSGG), aspartate 171, glycine 184, aspartate 188, and asparagine 277. Aspartate 309 is a Fe cation binding site.

It belongs to the KAE1 / TsaD family. Fe(2+) serves as cofactor.

It localises to the cytoplasm. It carries out the reaction L-threonylcarbamoyladenylate + adenosine(37) in tRNA = N(6)-L-threonylcarbamoyladenosine(37) in tRNA + AMP + H(+). Functionally, required for the formation of a threonylcarbamoyl group on adenosine at position 37 (t(6)A37) in tRNAs that read codons beginning with adenine. Is involved in the transfer of the threonylcarbamoyl moiety of threonylcarbamoyl-AMP (TC-AMP) to the N6 group of A37, together with TsaE and TsaB. TsaD likely plays a direct catalytic role in this reaction. In Lactobacillus johnsonii (strain CNCM I-12250 / La1 / NCC 533), this protein is tRNA N6-adenosine threonylcarbamoyltransferase.